The chain runs to 360 residues: MEKVFNFCAGPAMLPVDVLAQAQKELVNWNGLGTSVMEISHRSKEFIKVAEESEQDLRDLLAIPDNYKVLFCQGGARAQFAAVPLNLLGGNTKADYVDAGYWAQSAVEEAQKYCTPNVINTIIDVDGKKAVQPASEWALSDDAVYVHFCPNETIDGIEINDLPVTDKPIVADMSSTILSRKIDVSKYGVIYAGAQKNIGPAGLTIVIVRDDLLDLASQTLPSVLNYGVLADKESMFNTPPTYAWYLAGLVFKWLKSNGGIDAMETHNRKKAAVLYDYIDQSDFYRNDVHSDNRSLMNVPFQLANPELDTKFLELADEAGLKALKGHRVVGGMRASIYNAMPLEGVEALVQFMKEFEEKYV.

Position 42 (R42) interacts with L-glutamate. Pyridoxal 5'-phosphate contacts are provided by residues 76–77 (AR), W102, T153, D172, and Q195. At K196 the chain carries N6-(pyridoxal phosphate)lysine. Residue 237–238 (NT) coordinates pyridoxal 5'-phosphate.

It belongs to the class-V pyridoxal-phosphate-dependent aminotransferase family. SerC subfamily. Homodimer. Pyridoxal 5'-phosphate serves as cofactor.

The protein resides in the cytoplasm. It carries out the reaction O-phospho-L-serine + 2-oxoglutarate = 3-phosphooxypyruvate + L-glutamate. The catalysed reaction is 4-(phosphooxy)-L-threonine + 2-oxoglutarate = (R)-3-hydroxy-2-oxo-4-phosphooxybutanoate + L-glutamate. The protein operates within amino-acid biosynthesis; L-serine biosynthesis; L-serine from 3-phospho-D-glycerate: step 2/3. It functions in the pathway cofactor biosynthesis; pyridoxine 5'-phosphate biosynthesis; pyridoxine 5'-phosphate from D-erythrose 4-phosphate: step 3/5. In terms of biological role, catalyzes the reversible conversion of 3-phosphohydroxypyruvate to phosphoserine and of 3-hydroxy-2-oxo-4-phosphonooxybutanoate to phosphohydroxythreonine. This chain is Phosphoserine aminotransferase, found in Aliivibrio fischeri (strain ATCC 700601 / ES114) (Vibrio fischeri).